A 398-amino-acid polypeptide reads, in one-letter code: MGKTISLLISVVLVAYYLYIPLPDAIEEPWKVVWETAFVKIGTDLASFGELLGISHFMETIQLLMSFQEVPPTSDEHVTVMETAFDSVPVRIYIPKRKSMALRRGLFYIHGGGWCLGSAAHFSYDTLSRWTAHKLDAVVVSTDYGLAPKHHFPRQFEDVYRSLRWFLQEDVLEKYGVDPRRVGVSGDSAGGNLAAAVTQQLIQDPDVKIKLKVQALIYPALQALDTNVPSQQEGSHFPVLTRSLMVRFWSEYFTTDRGLEKAMLLNQHVPMESSHLLQFVNWSSLLPERYKKSPVYKNPTPGSSELAQKYPGFIDVKACPLLANDNILHHLPKTYIITCQYDVLRDDGLMYVKRLQNVGVHVTHHHVEDGFHGTFSFPGLKLSERMKNQYLSWLIKNL.

The Cytoplasmic portion of the chain corresponds to 1–5; it reads MGKTI. A helical; Signal-anchor for type II membrane protein membrane pass occupies residues 6 to 26; it reads SLLISVVLVAYYLYIPLPDAI. The Lumenal segment spans residues 27–398; it reads EEPWKVVWET…QYLSWLIKNL (372 aa). Residues 110–112 carry the Involved in the stabilization of the negatively charged intermediate by the formation of the oxyanion hole motif; it reads HGG. Cys-115 and Cys-339 are disulfide-bonded. The active site involves Ser-188. N-linked (GlcNAc...) asparagine glycosylation is present at Asn-281. Catalysis depends on residues Asp-342 and His-372.

Belongs to the 'GDXG' lipolytic enzyme family. In terms of processing, N-glycosylated. As to expression, highest levels in liver with lower levels in jejunum and kidney.

The protein localises to the endoplasmic reticulum membrane. It is found in the microsome membrane. The catalysed reaction is a triacylglycerol + H2O = a diacylglycerol + a fatty acid + H(+). Its function is as follows. Displays cellular triglyceride lipase activity in liver, increases the levels of intracellular fatty acids derived from the hydrolysis of newly formed triglyceride stores and plays a role in very low-density lipoprotein assembly. Displays serine esterase activity in liver. Deacetylates a variety of arylacetamide substrates, including xenobiotic compounds and procarcinogens, converting them to the primary arylamide compounds and increasing their toxicity. This chain is Arylacetamide deacetylase (Aadac), found in Mus musculus (Mouse).